A 146-amino-acid chain; its full sequence is Kappa-casein (146 aa).

Threonine 107, threonine 112, and threonine 118 each carry an O-linked (GalNAc...) threonine glycan. Serine 143 is subject to Phosphoserine.

Belongs to the kappa-casein family. Mammary gland specific. Secreted in milk.

The protein localises to the secreted. Its function is as follows. Kappa-casein stabilizes micelle formation, preventing casein precipitation in milk. The protein is Kappa-casein (CSN3) of Dicotyles tajacu (Collared peccary).